The chain runs to 30 residues: Conotoxin CcTx (30 aa).

P2 carries the 4-hydroxyproline modification. S7 is a glycosylation site (O-linked (HexNAc...) serine). 3 disulfide bridges follow: C12/C21, C13/C26, and C24/C30. P17 and P22 each carry 4-hydroxyproline.

O-glycosylated at Ser-7 by a core type 9 glycan, containing both D- and L-galactose units (alpha-L-Galp-(1-&gt;4)-alpha-D- GlcpNAc-(1-&gt;6)-[alpha-L-Galp-(1-&gt;2)-bets-D-Galp-(1-&gt;3)-]alpha-D-GalpNAc-(1-&gt;O)). In terms of tissue distribution, expressed by the venom duct.

The protein localises to the secreted. Functionally, may specifically activate neuronal voltage-gated sodium channels (Nav) at the resting membrane potential. Causes a marked contraction and extension of the caudal and dorsal fins in fish and noticeable spontaneous contractions of isolated frog neuromuscular preparations. The polypeptide is Conotoxin CcTx (Conus consors (Singed cone)).